The primary structure comprises 549 residues: Cytochrome c oxidase subunit 1 (549 aa).

Residues 18-38 (LCYLLVAILSGFVGYVYSLFI) traverse the membrane as a helical segment. Residues Glu41 and Gly46 each coordinate Ca(2+). A helical transmembrane segment spans residues 42–62 (LSLIGCGILFGDYQFYNVLIT). His64 is a Fe(II)-heme a binding site. Helical transmembrane passes span 66-86 (LIMV…NYFI), 100-120 (LNNM…NGFL), 148-168 (FVMF…INLL), 186-206 (LFIW…PVLA), and 222-242 (FYDV…WFFG). Residue His243 coordinates Cu cation. A cross-link (1'-histidyl-3'-tyrosine (His-Tyr)) is located at residues 243-247 (HPEVY). 2 helical membrane passes run 246-266 (VYII…VIGF) and 269-289 (VFST…GMFV). Residue Tyr247 coordinates O2. Cu cation contacts are provided by His292 and His293. Transmembrane regions (helical) follow at residues 306 to 326 (YFGG…FNWI) and 340 to 360 (VYFV…GLFL). 2 residues coordinate Mg(2+): His370 and Asp371. His378 lines the heme a3 pocket. The next 5 membrane-spanning stretches (helical) occupy residues 379–399 (FHYV…IHFL), 402–422 (WLPI…LFIG), 460–480 (MLLL…FLFW), 484–504 (LFFV…STWL), and 520–540 (IVLD…IFFW). His380 serves as a coordination point for Fe(II)-heme a.

The protein belongs to the heme-copper respiratory oxidase family. As to quaternary structure, component of the cytochrome c oxidase (complex IV, CIV), a multisubunit enzyme composed of a catalytic core of 3 subunits and several supernumerary subunits. The complex exists as a monomer or a dimer and forms supercomplexes (SCs) in the inner mitochondrial membrane with ubiquinol-cytochrome c oxidoreductase (cytochrome b-c1 complex, complex III, CIII). Requires heme as cofactor. Cu cation serves as cofactor.

The protein localises to the mitochondrion inner membrane. It carries out the reaction 4 Fe(II)-[cytochrome c] + O2 + 8 H(+)(in) = 4 Fe(III)-[cytochrome c] + 2 H2O + 4 H(+)(out). It functions in the pathway energy metabolism; oxidative phosphorylation. In terms of biological role, component of the cytochrome c oxidase, the last enzyme in the mitochondrial electron transport chain which drives oxidative phosphorylation. The respiratory chain contains 3 multisubunit complexes succinate dehydrogenase (complex II, CII), ubiquinol-cytochrome c oxidoreductase (cytochrome b-c1 complex, complex III, CIII) and cytochrome c oxidase (complex IV, CIV), that cooperate to transfer electrons derived from NADH and succinate to molecular oxygen, creating an electrochemical gradient over the inner membrane that drives transmembrane transport and the ATP synthase. Cytochrome c oxidase is the component of the respiratory chain that catalyzes the reduction of oxygen to water. Electrons originating from reduced cytochrome c in the intermembrane space (IMS) are transferred via the dinuclear copper A center (CU(A)) of subunit 2 and heme A of subunit 1 to the active site in subunit 1, a binuclear center (BNC) formed by heme A3 and copper B (CU(B)). The BNC reduces molecular oxygen to 2 water molecules using 4 electrons from cytochrome c in the IMS and 4 protons from the mitochondrial matrix. In Leishmania tarentolae (Sauroleishmania tarentolae), this protein is Cytochrome c oxidase subunit 1 (COI).